The chain runs to 312 residues: Acetyl-coenzyme A carboxylase carboxyl transferase subunit alpha (312 aa).

The CoA carboxyltransferase C-terminal domain maps to 36–286 (NLEKEISKTY…ADYVKKSLNE (251 aa)).

Belongs to the AccA family. As to quaternary structure, acetyl-CoA carboxylase is a heterohexamer composed of biotin carboxyl carrier protein (AccB), biotin carboxylase (AccC) and two subunits each of ACCase subunit alpha (AccA) and ACCase subunit beta (AccD).

Its subcellular location is the cytoplasm. It carries out the reaction N(6)-carboxybiotinyl-L-lysyl-[protein] + acetyl-CoA = N(6)-biotinyl-L-lysyl-[protein] + malonyl-CoA. It functions in the pathway lipid metabolism; malonyl-CoA biosynthesis; malonyl-CoA from acetyl-CoA: step 1/1. Component of the acetyl coenzyme A carboxylase (ACC) complex. First, biotin carboxylase catalyzes the carboxylation of biotin on its carrier protein (BCCP) and then the CO(2) group is transferred by the carboxyltransferase to acetyl-CoA to form malonyl-CoA. This Campylobacter jejuni subsp. jejuni serotype O:6 (strain 81116 / NCTC 11828) protein is Acetyl-coenzyme A carboxylase carboxyl transferase subunit alpha.